Reading from the N-terminus, the 310-residue chain is uncharacterized protein (310 aa).

9 helical membrane passes run 1 to 21, 38 to 58, 74 to 94, 110 to 130, 135 to 155, 194 to 214, 228 to 248, 256 to 276, and 284 to 304; these read MIYF…MFSK, FFFY…VVYT, TSYF…FFIF, YGLW…SFLF, WILY…IFFS, IFIT…IVFS, LFII…MYLF, FPIM…KILI, and IFLT…INLI.

Belongs to the TerC family.

It localises to the cell membrane. This is an uncharacterized protein from Buchnera aphidicola subsp. Schizaphis graminum (strain Sg).